Consider the following 118-residue polypeptide: Developmental pluripotency-associated protein 5A (118 aa).

One can recognise a KH; atypical domain in the interval 24-86 (PEVFQVQSLV…NNKIRAKWML (63 aa)).

It belongs to the KHDC1 family.

Its subcellular location is the cytoplasm. Its function is as follows. Involved in the maintenance of embryonic stem (ES) cell pluripotency. Dispensable for self-renewal of pluripotent ES cells and establishment of germ cells. Associates with specific target mRNAs. This chain is Developmental pluripotency-associated protein 5A (Dppa5a), found in Mus musculus (Mouse).